The following is a 374-amino-acid chain: Ribosomal RNA large subunit methyltransferase G (374 aa).

This sequence belongs to the methyltransferase superfamily. RlmG family.

It is found in the cytoplasm. It catalyses the reaction guanosine(1835) in 23S rRNA + S-adenosyl-L-methionine = N(2)-methylguanosine(1835) in 23S rRNA + S-adenosyl-L-homocysteine + H(+). Its function is as follows. Specifically methylates the guanine in position 1835 (m2G1835) of 23S rRNA. This is Ribosomal RNA large subunit methyltransferase G from Pseudomonas putida (strain ATCC 700007 / DSM 6899 / JCM 31910 / BCRC 17059 / LMG 24140 / F1).